Reading from the N-terminus, the 306-residue chain is 4-hydroxy-3-methylbut-2-enyl diphosphate reductase (306 aa).

Residue cysteine 12 participates in [4Fe-4S] cluster binding. Residues histidine 41 and histidine 74 each coordinate (2E)-4-hydroxy-3-methylbut-2-enyl diphosphate. Dimethylallyl diphosphate contacts are provided by histidine 41 and histidine 74. Histidine 41 and histidine 74 together coordinate isopentenyl diphosphate. Position 96 (cysteine 96) interacts with [4Fe-4S] cluster. Histidine 124 provides a ligand contact to (2E)-4-hydroxy-3-methylbut-2-enyl diphosphate. Histidine 124 is a binding site for dimethylallyl diphosphate. Histidine 124 provides a ligand contact to isopentenyl diphosphate. Glutamate 126 (proton donor) is an active-site residue. Residue threonine 164 coordinates (2E)-4-hydroxy-3-methylbut-2-enyl diphosphate. [4Fe-4S] cluster is bound at residue cysteine 194. (2E)-4-hydroxy-3-methylbut-2-enyl diphosphate is bound by residues serine 222, serine 223, asparagine 224, and serine 266. Dimethylallyl diphosphate is bound by residues serine 222, serine 223, asparagine 224, and serine 266. Isopentenyl diphosphate is bound by residues serine 222, serine 223, asparagine 224, and serine 266.

It belongs to the IspH family. [4Fe-4S] cluster is required as a cofactor.

It catalyses the reaction isopentenyl diphosphate + 2 oxidized [2Fe-2S]-[ferredoxin] + H2O = (2E)-4-hydroxy-3-methylbut-2-enyl diphosphate + 2 reduced [2Fe-2S]-[ferredoxin] + 2 H(+). The enzyme catalyses dimethylallyl diphosphate + 2 oxidized [2Fe-2S]-[ferredoxin] + H2O = (2E)-4-hydroxy-3-methylbut-2-enyl diphosphate + 2 reduced [2Fe-2S]-[ferredoxin] + 2 H(+). The protein operates within isoprenoid biosynthesis; dimethylallyl diphosphate biosynthesis; dimethylallyl diphosphate from (2E)-4-hydroxy-3-methylbutenyl diphosphate: step 1/1. It participates in isoprenoid biosynthesis; isopentenyl diphosphate biosynthesis via DXP pathway; isopentenyl diphosphate from 1-deoxy-D-xylulose 5-phosphate: step 6/6. In terms of biological role, catalyzes the conversion of 1-hydroxy-2-methyl-2-(E)-butenyl 4-diphosphate (HMBPP) into a mixture of isopentenyl diphosphate (IPP) and dimethylallyl diphosphate (DMAPP). Acts in the terminal step of the DOXP/MEP pathway for isoprenoid precursor biosynthesis. This chain is 4-hydroxy-3-methylbut-2-enyl diphosphate reductase, found in Dechloromonas aromatica (strain RCB).